The chain runs to 107 residues: Iron-sulfur cluster assembly protein CyaY (107 aa).

It belongs to the frataxin family.

Its function is as follows. Involved in iron-sulfur (Fe-S) cluster assembly. May act as a regulator of Fe-S biogenesis. This Enterobacter sp. (strain 638) protein is Iron-sulfur cluster assembly protein CyaY.